The sequence spans 182 residues: Ribosome maturation factor RimM (182 aa).

One can recognise a PRC barrel domain in the interval 103–182 (DGSYYWKDLM…TIEVDWDPGF (80 aa)).

Belongs to the RimM family. Binds ribosomal protein uS19.

The protein localises to the cytoplasm. In terms of biological role, an accessory protein needed during the final step in the assembly of 30S ribosomal subunit, possibly for assembly of the head region. Essential for efficient processing of 16S rRNA. May be needed both before and after RbfA during the maturation of 16S rRNA. It has affinity for free ribosomal 30S subunits but not for 70S ribosomes. This is Ribosome maturation factor RimM from Citrobacter koseri (strain ATCC BAA-895 / CDC 4225-83 / SGSC4696).